Reading from the N-terminus, the 242-residue chain is Uridylate kinase (242 aa).

13–16 contributes to the ATP binding site; that stretch reads KLSG. Residue G55 participates in UMP binding. Residues G56 and R60 each contribute to the ATP site. UMP contacts are provided by residues D75 and 136-143; that span reads TGNPFFTT. Residues T163, Y169, and D172 each contribute to the ATP site.

It belongs to the UMP kinase family. Homohexamer.

It is found in the cytoplasm. The enzyme catalyses UMP + ATP = UDP + ADP. The protein operates within pyrimidine metabolism; CTP biosynthesis via de novo pathway; UDP from UMP (UMPK route): step 1/1. With respect to regulation, inhibited by UTP. Catalyzes the reversible phosphorylation of UMP to UDP. This chain is Uridylate kinase, found in Zymomonas mobilis subsp. mobilis (strain ATCC 31821 / ZM4 / CP4).